The chain runs to 474 residues: MGGSDFEDDELFKDLYGEENEKKVESASGNQETSNVTPTKENEGYEELEKSGEAGAERTKENPFREEPGADFDRSGSDQQYSAEAEANQEDDLNETSQQAPDPSSYDIRGQALSSATWDNAEDGENSKNDNYNENQSALTGSGAMESNEDNAEETSPFNREDGKMFIGGLNWETTDDSLRDYFEQFGEVLDCTVMRDSTTGRSRGFGFLTFKNPKCVNEVMSKEHHLDGKIIDPKRAIPREEQEKTAKMFVGGVPGDCTEEEFRNFFNQFGRVLDATLMMDKDTGRPRGFGFVTYENESAVEATMSQPYITIHGKPVEVKRATPKASLRDSHDRHQHGYHGNANPYYAQNMNMYGGMTPAMMAQYYRQMQQYMEAMRNMPAAAGAVPYPQPVMPAGMADWQQQQQQGAAYFDPSKMNQGTGDGVPFSPSMPSGSSRGGYHGRNPGGPNRQRYRGRRDGRGGNTGGGHSFHPYRR.

Acidic residues predominate over residues 1-11; it reads MGGSDFEDDEL. The disordered stretch occupies residues 1 to 163; that stretch reads MGGSDFEDDE…ETSPFNREDG (163 aa). Residues 12–25 show a composition bias toward basic and acidic residues; sequence FKDLYGEENEKKVE. Positions 27-39 are enriched in polar residues; it reads ASGNQETSNVTPT. Residues 40 to 76 are compositionally biased toward basic and acidic residues; it reads KENEGYEELEKSGEAGAERTKENPFREEPGADFDRSG. Positions 129-140 are enriched in polar residues; the sequence is NDNYNENQSALT. RRM domains are found at residues 163-245 and 247-324; these read GKMF…EQEK and AKMF…RATP. A disordered region spans residues 412 to 474; it reads DPSKMNQGTG…GGHSFHPYRR (63 aa). Positions 425–434 are enriched in low complexity; sequence PFSPSMPSGS. Residues 435 to 444 are compositionally biased toward gly residues; it reads SRGGYHGRNP.

Its subcellular location is the nucleus. This is an uncharacterized protein from Schizosaccharomyces pombe (strain 972 / ATCC 24843) (Fission yeast).